A 328-amino-acid chain; its full sequence is P2Y purinoceptor 6 (328 aa).

The Extracellular portion of the chain corresponds to 1-27; that stretch reads MEWDNGTGQALGLPPTTCVYRENFKQL. Residue Asn-5 is glycosylated (N-linked (GlcNAc...) asparagine). A helical transmembrane segment spans residues 28–48; it reads LLPPVYSAVLAAGLPLNICVI. Over 49–62 the chain is Cytoplasmic; sequence TQICTSRRALTRTA. The chain crosses the membrane as a helical span at residues 63–83; it reads VYTLNLALADLLYACSLPLLI. At 84–101 the chain is on the extracellular side; sequence YNYAQGDHWPFGDFACRL. Residues Cys-99 and Cys-177 are joined by a disulfide bond. A helical transmembrane segment spans residues 102–122; sequence VRFLFYANLHGSILFLTCISF. The Cytoplasmic segment spans residues 123–144; the sequence is QRYLGICHPLAPWHKRGGRRAA. The helical transmembrane segment at 145–165 threads the bilayer; sequence WLVCVAVWLAVTTQCLPTAIF. Residues 166–194 lie on the Extracellular side of the membrane; that stretch reads AATGIQRNRTVCYDLSPPALATHYMPYGM. The chain crosses the membrane as a helical span at residues 195–215; sequence ALTVIGFLLPFAALLACYCLL. Residues 216 to 236 lie on the Cytoplasmic side of the membrane; it reads ACRLCRQDGPAEPVAQERRGK. A helical transmembrane segment spans residues 237–257; the sequence is AARMAVVVAAAFAISFLPFHI. Topologically, residues 258-280 are extracellular; it reads TKTAYLAVRSTPGVPCTVLEAFA. A helical transmembrane segment spans residues 281-303; the sequence is AAYKGTRPFASANSVLDPILFYF. Residues 304-328 lie on the Cytoplasmic side of the membrane; it reads TQKKFRRRPHELLQKLTAKWQRQGR.

It belongs to the G-protein coupled receptor 1 family.

It is found in the cell membrane. Functionally, receptor for extracellular UDP &gt; UTP &gt; ATP. The activity of this receptor is mediated by G proteins which activate a phosphatidylinositol-calcium second messenger system. This Homo sapiens (Human) protein is P2Y purinoceptor 6 (P2RY6).